The following is a 521-amino-acid chain: Cyclic AMP-responsive element-binding protein 3-like protein 2 (521 aa).

The Cytoplasmic portion of the chain corresponds to Met1–Thr378. Ser93 carries the post-translational modification Phosphoserine. A Glycyl lysine isopeptide (Lys-Gly) (interchain with G-Cter in SUMO2) cross-link involves residue Lys178. Residue Ser191 is modified to Phosphoserine. The interval Ser196–Leu264 is disordered. Low complexity predominate over residues Ser208–Pro220. In terms of domain architecture, bZIP spans Ala294–Leu357. The basic motif stretch occupies residues Lys296–Lys325. The leucine-zipper stretch occupies residues Leu336–Leu357. A helical; Signal-anchor for type II membrane protein transmembrane segment spans residues Cys379–Gly399. Residues Leu400–Phe521 are Lumenal-facing. Residues Arg427 to Leu430 carry the S1P recognition motif. N-linked (GlcNAc...) asparagine glycosylation is found at Asn505 and Asn518.

The protein belongs to the bZIP family. ATF subfamily. In terms of assembly, binds DNA as a dimer. In terms of processing, upon ER stress, translocated to the Golgi apparatus, where it is processed by regulated intramembrane proteolysis (RIP) to release the cytosol-facing N-terminal transcription factor domain. The cleavage is performed sequentially by site-1 and site-2 proteases (S1P/MBTPS1 and S2P/MBTPS2). N-glycosylated. Post-translationally, ubiquitinated by HRD1/SYVN1; undergoes 'Lys-48'-linked ubiquitination, followed by rapid proteasomal degradation under normal conditions. Upon ER stress, SYVN1 E3 ubiquitin-protein ligase dissociates from its substrate, ubiquitination does not occur and CREB3L2 is stabilized.

Its subcellular location is the endoplasmic reticulum membrane. The protein resides in the nucleus. In terms of biological role, transcription factor involved in unfolded protein response (UPR). In the absence of endoplasmic reticulum (ER) stress, inserted into ER membranes, with N-terminal DNA-binding and transcription activation domains oriented toward the cytosolic face of the membrane. In response to ER stress, transported to the Golgi, where it is cleaved in a site-specific manner by resident proteases S1P/MBTPS1 and S2P/MBTPS2. The released N-terminal cytosolic domain is translocated to the nucleus to effect transcription of specific target genes. Plays a critical role in chondrogenesis by activating the transcription of SEC23A, which promotes the transport and secretion of cartilage matrix proteins, and possibly that of ER biogenesis-related genes. In a neuroblastoma cell line, protects cells from ER stress-induced death. In vitro activates transcription of target genes via direct binding to the CRE site. The polypeptide is Cyclic AMP-responsive element-binding protein 3-like protein 2 (Creb3l2) (Rattus norvegicus (Rat)).